The sequence spans 431 residues: uncharacterized protein (431 aa).

Disordered regions lie at residues 1–37 and 102–132; these read MFWR…KLTP and PPPL…RRVA. Positions 22–32 are enriched in basic and acidic residues; that stretch reads GDFRRSSDPRL. The span at 106–121 shows a compositional bias: low complexity; it reads LSAGASRESAPRQPGP. The segment covering 122-132 has biased composition (basic and acidic residues); the sequence is GERERPRRRVA.

Its subcellular location is the cytoplasm. This is an uncharacterized protein from Homo sapiens (Human).